Reading from the N-terminus, the 310-residue chain is Pirin-like protein At1g50590 (310 aa).

The protein belongs to the pirin family.

The protein resides in the nucleus. This is Pirin-like protein At1g50590 from Arabidopsis thaliana (Mouse-ear cress).